A 407-amino-acid chain; its full sequence is Expansin-like protein 2 (407 aa).

The first 23 residues, 1–23, serve as a signal peptide directing secretion; the sequence is MKMKNFLSKSLLVLLIGLIGVKS. Positions 42-141 constitute an Expansin-like EG45 domain; the sequence is HGNCGYEQLT…KKVSCDVTGN (100 aa). 2 cysteine pairs are disulfide-bonded: Cys-45–Cys-75 and Cys-78–Cys-136. 3 N-linked (GlcNAc...) asparagine glycosylation sites follow: Asn-70, Asn-117, and Asn-387.

The protein belongs to the expansin family. Expansin A subfamily.

It localises to the secreted. Unlikely to encode with a protein with expansin activity. This Dictyostelium discoideum (Social amoeba) protein is Expansin-like protein 2 (expl2).